A 571-amino-acid chain; its full sequence is MSNKKTFKKYSRVAGLLTAALIIGNLVTANAESNKQNTASTETTTTNEQPKPESSELTTEKAGQKTDDMLNSNDMIKLAPKEMPLESAEKEEKKSEDKKKSEEDHTEEINDKIYSLNYNELEVLAKNGETIENFVPKEGVKKADKFIVIERKKKNINTTPVDISIIDSVTDRTYPAALQLANKGFTENKPDAVVTKRNPQKIHIDLPGMGDKATVEVNDPTYANVSTAIDNLVNQWHDNYSGGNTLPARTQYTESMVYSKSQIEAALNVNSKILDGTLGIDFKSISKGEKKVMIAAYKQIFYTVSANLPNNPADVFDKSVTFKELQRKGVSNEAPPLFVSNVAYGRTVFVKLETSSKSNDVEAAFSAALKGTDVKTNGKYSDILENSSFTAVVLGGDAAEHNKVVTKDFDVIRNVIKDNATFSRKNPAYPISYTSVFLKNNKIAGVNNRTEYVETTSTEYTSGKINLSHQGAYVAQYEILWDEINYDDKGKEVITKRRWDNNWYSKTSPFSTVIPLGANSRNIRIMARECTGLAWEWWRKVIDERDVKLSKEINVNISGSTLSPYGSITYK.

The N-terminal stretch at 1–33 is a signal peptide; it reads MSNKKTFKKYSRVAGLLTAALIIGNLVTANAES. The interval 30 to 108 is disordered; the sequence is NAESNKQNTA…KKSEEDHTEE (79 aa). Positions 37-48 are enriched in low complexity; that stretch reads NTASTETTTTNE. Basic and acidic residues-rich tracts occupy residues 50–68 and 79–108; these read PKPESSELTTEKAGQKTDD and APKEMPLESAEKEEKKSEDKKKSEEDHTEE. 4 beta stranded membrane passes run 260 to 273, 280 to 289, 358 to 367, and 375 to 387; these read KSQIEAALNVNSKI, IDFKSISKGE, SNDVEAAFSA, and KTNGKYSDILENS. A Conserved undecapeptide motif is present at residues 529–539; it reads ECTGLAWEWWR. Positions 561-562 match the Cholesterol binding motif; sequence TL.

The protein belongs to the cholesterol-dependent cytolysin family. In terms of assembly, homooligomeric pore complex of 35 to 50 subunits; when inserted in the host membrane.

Its subcellular location is the secreted. It localises to the host cell membrane. Its function is as follows. A cholesterol-dependent toxin that causes cytolysis by forming pores in cholesterol containing host membranes. After binding to target membranes, the protein undergoes a major conformation change, leading to its insertion in the host membrane and formation of an oligomeric pore complex. Cholesterol is required for binding to host membranes, membrane insertion and pore formation; cholesterol binding is mediated by a Thr-Leu pair in the C-terminus. Can be reversibly inactivated by oxidation. The chain is Streptolysin O (slo) from Streptococcus pyogenes serotype M3 (strain ATCC BAA-595 / MGAS315).